A 498-amino-acid chain; its full sequence is MRTNPTTSSPVVSTLEEKNLGRIAQIIGPVLDVVFPPGKMPNIYNALAVKGRDTVGQQINVTCEVQQLLGNNRVRAVAMSATDGLMRGMEVIDTGAPLSVPVGGATLGRIFNVLGEPVDNLGPVDTRTTSPIHRSAPAFIQLDTKFSIFETGIKVVDLLAPYRRGGKIGLFGGAGVGKTVLIMELINNIAKAHGGVSVFGGVGERTREGNDLYMEMKESGVINEKNIAESKVALVYGQMNEPPGARMRVGLTALTMAEYFRDVNEQDVLLFIDNIFRFVQAGSEVSALLGRMPSAVGYQPTLSTEMGSLQERITSTKEGSITSIQAVYVPADDLTDPAPATTFAHLDATTVLSRVLAAKGIYPAVDPLDSTSTMLQPRIVGEEHYETAQRVKQTSQRYKELQDIIAILGLDELSEEDRLTVARARKIERFLSQPFFVAEVFTGSPGKYVGLAETIRGFQLILSGELDGLPEQAFYLVGNIDEATAKAMNLEVESKLKK.

Gly172–Thr179 is a binding site for ATP.

This sequence belongs to the ATPase alpha/beta chains family. As to quaternary structure, F-type ATPases have 2 components, CF(1) - the catalytic core - and CF(0) - the membrane proton channel. CF(1) has five subunits: alpha(3), beta(3), gamma(1), delta(1), epsilon(1). CF(0) has four main subunits: a(1), b(1), b'(1) and c(9-12).

The protein resides in the plastid. It is found in the chloroplast thylakoid membrane. The catalysed reaction is ATP + H2O + 4 H(+)(in) = ADP + phosphate + 5 H(+)(out). Functionally, produces ATP from ADP in the presence of a proton gradient across the membrane. The catalytic sites are hosted primarily by the beta subunits. The polypeptide is ATP synthase subunit beta, chloroplastic (Nypa fruticans (Nypa palm)).